Consider the following 207-residue polypeptide: Guanylate kinase (207 aa).

The 180-residue stretch at 5 to 184 (GNLFIVSAPS…ALADLRAIIR (180 aa)) folds into the Guanylate kinase-like domain. Position 12-19 (12-19 (APSGAGKS)) interacts with ATP.

It belongs to the guanylate kinase family.

It localises to the cytoplasm. It carries out the reaction GMP + ATP = GDP + ADP. Functionally, essential for recycling GMP and indirectly, cGMP. This chain is Guanylate kinase, found in Shewanella sp. (strain MR-7).